Here is a 358-residue protein sequence, read N- to C-terminus: Phospho-N-acetylmuramoyl-pentapeptide-transferase (358 aa).

10 helical membrane-spanning segments follow: residues 27–47 (LFNN…SLFA), 81–101 (MGGV…TINL), 106–126 (LFLL…DDYL), 147–167 (VISI…PLVI), 171–191 (SWVI…LVGI), 201–221 (LDGL…TEIL), 228–248 (LFVF…FLKY), 255–275 (IFMG…IALL), 278–298 (SVFT…SVII), and 336–356 (IVEN…VLKI).

This sequence belongs to the glycosyltransferase 4 family. MraY subfamily. Mg(2+) is required as a cofactor.

It localises to the cell inner membrane. The catalysed reaction is UDP-N-acetyl-alpha-D-muramoyl-L-alanyl-gamma-D-glutamyl-meso-2,6-diaminopimeloyl-D-alanyl-D-alanine + di-trans,octa-cis-undecaprenyl phosphate = di-trans,octa-cis-undecaprenyl diphospho-N-acetyl-alpha-D-muramoyl-L-alanyl-D-glutamyl-meso-2,6-diaminopimeloyl-D-alanyl-D-alanine + UMP. It participates in cell wall biogenesis; peptidoglycan biosynthesis. Catalyzes the initial step of the lipid cycle reactions in the biosynthesis of the cell wall peptidoglycan: transfers peptidoglycan precursor phospho-MurNAc-pentapeptide from UDP-MurNAc-pentapeptide onto the lipid carrier undecaprenyl phosphate, yielding undecaprenyl-pyrophosphoryl-MurNAc-pentapeptide, known as lipid I. The protein is Phospho-N-acetylmuramoyl-pentapeptide-transferase of Prochlorococcus marinus (strain MIT 9215).